A 238-amino-acid chain; its full sequence is MRPSGRKPDELRPVRLTRHYTRHAEGSVLVEFGDTRVLCTASVEERVPPWLRNQGRGWVTAEYGMLPRSTGTRNDREAARGKQQGRTIEIQRLIGRALRAAVDLEALGERRVVLDCDVLQADGGTRTAAITGAYVALVDACNLLRKEGRIRRSPIFGQVAAVSVGIYQGTPVLDLDYAEDSEAETDMNVVMNEAGGFIELQGTAEGHAFRRDELNAMTELAELGVAQLIETQRQALEA.

Residues Arg86 and 124–126 contribute to the phosphate site; that span reads GTR.

Belongs to the RNase PH family. In terms of assembly, homohexameric ring arranged as a trimer of dimers.

It catalyses the reaction tRNA(n+1) + phosphate = tRNA(n) + a ribonucleoside 5'-diphosphate. Phosphorolytic 3'-5' exoribonuclease that plays an important role in tRNA 3'-end maturation. Removes nucleotide residues following the 3'-CCA terminus of tRNAs; can also add nucleotides to the ends of RNA molecules by using nucleoside diphosphates as substrates, but this may not be physiologically important. Probably plays a role in initiation of 16S rRNA degradation (leading to ribosome degradation) during starvation. This is Ribonuclease PH from Alkalilimnicola ehrlichii (strain ATCC BAA-1101 / DSM 17681 / MLHE-1).